The primary structure comprises 310 residues: Manganese ABC transporter substrate-binding lipoprotein scaA (310 aa).

Positions 1-19 are cleaved as a signal peptide; the sequence is MKKCRFLVLLLLAFVGLAA. Cysteine 20 carries the N-palmitoyl cysteine lipid modification. Residue cysteine 20 is the site of S-diacylglycerol cysteine attachment. Mn(2+)-binding residues include histidine 68, histidine 140, glutamate 206, and aspartate 281.

This sequence belongs to the bacterial solute-binding protein 9 family. Lipoprotein receptor antigen (Lrai) subfamily. The complex is composed of two ATP-binding proteins (ScaC), two transmembrane proteins (ScaB) and a solute-binding protein (ScaA).

It is found in the cell membrane. Part of ATP-binding cassette (ABC) transport system ScaABC involved in manganese import. Essential for growth under Mn(2+)-limiting conditions. Also acts as an adhesin which is involved on adherence to extracellular matrix. It is an important factor in pathogenesis and infection. In Streptococcus gordonii, this protein is Manganese ABC transporter substrate-binding lipoprotein scaA.